The chain runs to 441 residues: Probable D-serine dehydratase (441 aa).

At lysine 115 the chain carries N6-(pyridoxal phosphate)lysine.

This sequence belongs to the serine/threonine dehydratase family. DsdA subfamily. Pyridoxal 5'-phosphate is required as a cofactor.

The enzyme catalyses D-serine = pyruvate + NH4(+). The polypeptide is Probable D-serine dehydratase (Fusobacterium nucleatum subsp. nucleatum (strain ATCC 25586 / DSM 15643 / BCRC 10681 / CIP 101130 / JCM 8532 / KCTC 2640 / LMG 13131 / VPI 4355)).